The following is a 798-amino-acid chain: Vacuolar protein sorting-associated protein 53 homolog (798 aa).

This sequence belongs to the VPS53 family. In terms of assembly, component of the Golgi-associated retrograde protein (GARP) complex, also called VFT (VPS fifty-three) complex, composed of vps-51, vps-52, vps-53 and vps-54. Within the complex interacts with vps-51, vps-52 and vps-54. In terms of tissue distribution, ubiquitously expressed, with particularly strong expression in neuronal cells. Specifically expressed in head and tail neurons and in the pharynx and ventral cord motor neurons.

It is found in the golgi apparatus. Its subcellular location is the trans-Golgi network membrane. The protein localises to the endosome membrane. It localises to the perikaryon. The protein resides in the cytoplasm. It is found in the perinuclear region. In terms of biological role, acts as a component of the GARP complex that is involved in retrograde transport from early and late endosomes to the trans-Golgi network (TGN). The GARP complex facilitates tethering as well as SNARE complex assembly at the Golgi. Plays a role in the trafficking of cargo to dense-core vesicles, probably through association with the EARP-interacting protein eipr-1. Important for neuronal function. The sequence is that of Vacuolar protein sorting-associated protein 53 homolog from Caenorhabditis elegans.